Here is a 252-residue protein sequence, read N- to C-terminus: MPRFPRTLPRLTAVLLLACTAFSAAAHGNHTHWGYTGHDSPESWGNLSEEFRLCSTGKNQSPVNITETVSGKLPAIKVNYKPSMVDVENNGHTIQVNYPEGGNTLTVNGRTYTLKQFHFHVPSENQIKGRTFPMEAHFVHLDENKQPLVLAVLYEAGKTNGRLSSIWNVMPMTAGKVKLNQPFDASTLLPKRLKYYRFAGSLTTPPCTEGVSWLVLKTYDHIDQAQAEKFTRAVGSENNRPVQPLNARVVIE.

Positions Met1–Ala26 are cleaved as a signal peptide. One can recognise an Alpha-carbonic anhydrase domain in the interval Thr31–Glu252. Cys54 and Cys207 are joined by a disulfide. His92 (proton acceptor) is an active-site residue. Zn(2+) is bound by residues His118, His120, and His137. Position 203-204 (Thr203–Thr204) interacts with substrate.

This sequence belongs to the alpha-carbonic anhydrase family. In terms of assembly, homodimer. The cofactor is Zn(2+).

It is found in the periplasm. The catalysed reaction is hydrogencarbonate + H(+) = CO2 + H2O. Reversible hydration of carbon dioxide. The polypeptide is Carbonic anhydrase (cah) (Neisseria gonorrhoeae).